A 233-amino-acid polypeptide reads, in one-letter code: Large ribosomal subunit protein uL1 (233 aa).

Belongs to the universal ribosomal protein uL1 family. In terms of assembly, part of the 50S ribosomal subunit.

Functionally, binds directly to 23S rRNA. The L1 stalk is quite mobile in the ribosome, and is involved in E site tRNA release. Protein L1 is also a translational repressor protein, it controls the translation of the L11 operon by binding to its mRNA. The protein is Large ribosomal subunit protein uL1 of Geotalea daltonii (strain DSM 22248 / JCM 15807 / FRC-32) (Geobacter daltonii).